A 328-amino-acid chain; its full sequence is MPSTKVAALSAVLALASTVAGHGYVQNIVIDGESYSGYIVTQFPYESNPPAVIGWATTATDLGYVDPTEYTNADIICHKNATPGALSAPVAAGGTVELQWTTWPDSHHGPVISYLANCNGNCSTVDKTKLDFVKIDASGLIDDTTVPGTWASDQLIAANNSWTVTIPETIAPGNYVLRHEIIALHSAENTDGAQNYPQCINLEITGSGTASPTGTPGEELYTPTDPGILVNIYQSLSTYVIPGPTLWSGAANNAVASATAAASATATPTTLVTSVASATDSPSTVAPASSTTATSVLTSVVPSVTSFVPVVTVTDVVTVTTVITTTVF.

The N-terminal stretch at 1 to 21 is a signal peptide; it reads MPSTKVAALSAVLALASTVAG. His22 contributes to the Cu(2+) binding site. His22 is subject to Methylhistidine. 2 disulfide bridges follow: Cys77–Cys199 and Cys118–Cys122. The N-linked (GlcNAc...) asparagine glycan is linked to Asn80. His107 contacts Cu(2+). Asn121 and Asn159 each carry an N-linked (GlcNAc...) asparagine glycan. Residues His185 and Gln194 each contribute to the O2 site. Tyr196 contributes to the Cu(2+) binding site. Ser235 and Ser237 each carry an O-linked (Man...) serine glycan. Thr238 and Thr245 each carry an O-linked (Man...) threonine glycan.

It belongs to the polysaccharide monooxygenase AA9 family. The cofactor is Cu(2+). Post-translationally, the catalytically essential N-terminal histidine His-22 is post-translationally modified by methylation to prevent protonation of the histidine side chain, and protect the critical active site of the enzyme from oxidative damage.

Its subcellular location is the secreted. The enzyme catalyses [(1-&gt;4)-beta-D-glucosyl]n+m + reduced acceptor + O2 = 4-dehydro-beta-D-glucosyl-[(1-&gt;4)-beta-D-glucosyl]n-1 + [(1-&gt;4)-beta-D-glucosyl]m + acceptor + H2O.. Lytic polysaccharide monooxygenase (LPMO) that depolymerizes crystalline and amorphous polysaccharides via the oxidation of scissile alpha- or beta-(1-4)-glycosidic bonds, yielding C1 and C4 oxidation products. Catalysis by LPMOs requires the reduction of the active-site copper from Cu(II) to Cu(I) by a reducing agent and H(2)O(2) or O(2) as a cosubstrate. Shows activity on cellulosic substrates (Avicel, carboxymethylcellulose) and xylan. This Talaromyces verruculosus (Penicillium verruculosum) protein is AA9 family lytic polysaccharide monooxygenase A.